A 212-amino-acid chain; its full sequence is RING-H2 finger protein ATL68 (212 aa).

A helical membrane pass occupies residues 24–44 (LGLGYSIAIALGFLVLISTII). The RING-type; atypical zinc-finger motif lies at 136–178 (CSICLCEYMEEEMLRMMPECKHYFHVYCLDAWLKLNGSCPVCR). The tract at residues 182–212 (LPTPQSTPQSTPLSEVVPLSQYAADRRRSRR) is disordered. Residues 185-195 (PQSTPQSTPLS) are compositionally biased toward low complexity.

It belongs to the RING-type zinc finger family. ATL subfamily.

Its subcellular location is the membrane. The catalysed reaction is S-ubiquitinyl-[E2 ubiquitin-conjugating enzyme]-L-cysteine + [acceptor protein]-L-lysine = [E2 ubiquitin-conjugating enzyme]-L-cysteine + N(6)-ubiquitinyl-[acceptor protein]-L-lysine.. Its pathway is protein modification; protein ubiquitination. The polypeptide is RING-H2 finger protein ATL68 (ATL68) (Arabidopsis thaliana (Mouse-ear cress)).